A 784-amino-acid polypeptide reads, in one-letter code: N-alpha-acetyltransferase 35, NatC auxiliary subunit homolog (784 aa).

Disordered regions lie at residues 1–23, 320–353, and 606–630; these read MYPSTLPAEADPSTMNGSSVAEP, NTLDRGTQPEKGSDAPNPMGFSPRIHDRSQPPAF, and SKTQSGGSGAAKNRKAAKPKKNKKT. Residues 617–630 are compositionally biased toward basic residues; it reads KNRKAAKPKKNKKT.

The protein belongs to the MAK10 family. Component of the N-terminal acetyltransferase C (NatC) complex, which is composed of Naa35, Sbat/Naa38 and Naa30A.

It is found in the cytoplasm. In terms of biological role, auxillary component of the N-terminal acetyltransferase C (NatC) complex which catalyzes acetylation of N-terminal methionine residues. The polypeptide is N-alpha-acetyltransferase 35, NatC auxiliary subunit homolog (Drosophila melanogaster (Fruit fly)).